Reading from the N-terminus, the 487-residue chain is E3 ubiquitin-protein ligase RNF8 (487 aa).

The FHA domain maps to 38-92 (VTIGRGFSVTYQLISKVCPLMISRNHCVLKQNPEGQWTIMDNKSLNGVWLNRERL). Residues 68 to 72 (QNPEG) form a required for interaction with PIWIL1 region. A disordered region spans residues 135–195 (CLAPKNDHTT…PEKLHGKGEA (61 aa)). Residue S157 is modified to Phosphoserine. Residues 184–193 (AEPEKLHGKG) show a composition bias toward basic and acidic residues. The segment at 405–443 (CIICSEYFIEAVTLNCAHSFCSFCISEWMKRKVECPICR) adopts an RING-type zinc-finger fold.

This sequence belongs to the RNF8 family. As to quaternary structure, homodimer. Forms a E2-E3 ubiquitin ligase complex composed of the RNF8 homodimer and a E2 heterodimer of UBE2N and UBE2V2. Interacts with class III E2s, including UBE2E1, UBE2E2, and UBE2E3 and with UBE2N. Interacts with RXRA. Interacts (via FHA domain) with phosphorylated HERC2 (via C-terminus). Interacts with PIWIL1; leading to sequester RNF8 in the cytoplasm. Interacts with WRAP53/TCAB1. Autoubiquitinated through 'Lys-48' and 'Lys-63' of ubiquitin. 'Lys-63' polyubiquitination is mediated by UBE2N. 'Lys-29'-type polyubiquitination is also observed, but it doesn't require its own functional RING-type zinc finger.

The protein localises to the nucleus. It localises to the cytoplasm. The protein resides in the midbody. It is found in the chromosome. Its subcellular location is the telomere. It carries out the reaction S-ubiquitinyl-[E2 ubiquitin-conjugating enzyme]-L-cysteine + [acceptor protein]-L-lysine = [E2 ubiquitin-conjugating enzyme]-L-cysteine + N(6)-ubiquitinyl-[acceptor protein]-L-lysine.. It participates in protein modification; protein ubiquitination. E3 ubiquitin-protein ligase that plays a key role in DNA damage signaling via 2 distinct roles: by mediating the 'Lys-63'-linked ubiquitination of histones H2A and H2AX and promoting the recruitment of DNA repair proteins at double-strand breaks (DSBs) sites, and by catalyzing 'Lys-48'-linked ubiquitination to remove target proteins from DNA damage sites. Following DNA DSBs, it is recruited to the sites of damage by ATM-phosphorylated MDC1 and catalyzes the 'Lys-63'-linked ubiquitination of histones H2A and H2AX, thereby promoting the formation of TP53BP1 and BRCA1 ionizing radiation-induced foci (IRIF). Also controls the recruitment of UIMC1-BRCC3 (RAP80-BRCC36) and PAXIP1/PTIP to DNA damage sites. Promotes the recruitment of NBN to DNA damage sites by catalyzing 'Lys-6'-linked ubiquitination of NBN. Also recruited at DNA interstrand cross-links (ICLs) sites and catalyzes 'Lys-63'-linked ubiquitination of histones H2A and H2AX, leading to recruitment of FAAP20 and Fanconi anemia (FA) complex, followed by interstrand cross-link repair. H2A ubiquitination also mediates the ATM-dependent transcriptional silencing at regions flanking DSBs in cis, a mechanism to avoid collision between transcription and repair intermediates. Promotes the formation of 'Lys-63'-linked polyubiquitin chains via interactions with the specific ubiquitin-conjugating UBE2N/UBC13 and ubiquitinates non-histone substrates such as PCNA. Substrates that are polyubiquitinated at 'Lys-63' are usually not targeted for degradation. Also catalyzes the formation of 'Lys-48'-linked polyubiquitin chains via interaction with the ubiquitin-conjugating UBE2L6/UBCH8, leading to degradation of substrate proteins such as CHEK2, JMJD2A/KDM4A and KU80/XRCC5: it is still unclear how the preference toward 'Lys-48'- versus 'Lys-63'-linked ubiquitination is regulated but it could be due to RNF8 ability to interact with specific E2 specific ligases. For instance, interaction with phosphorylated HERC2 promotes the association between RNF8 and UBE2N/UBC13 and favors the specific formation of 'Lys-63'-linked ubiquitin chains. Promotes non-homologous end joining (NHEJ) by promoting the 'Lys-48'-linked ubiquitination and degradation the of KU80/XRCC5. Following DNA damage, mediates the ubiquitination and degradation of JMJD2A/KDM4A in collaboration with RNF168, leading to unmask H4K20me2 mark and promote the recruitment of TP53BP1 at DNA damage sites. Following DNA damage, mediates the ubiquitination and degradation of POLD4/p12, a subunit of DNA polymerase delta. In the absence of POLD4, DNA polymerase delta complex exhibits higher proofreading activity. In addition to its function in damage signaling, also plays a role in higher-order chromatin structure by mediating extensive chromatin decondensation. Involved in the activation of ATM by promoting histone H2B ubiquitination, which indirectly triggers histone H4 'Lys-16' acetylation (H4K16ac), establishing a chromatin environment that promotes efficient activation of ATM kinase. Required in the testis, where it plays a role in the replacement of histones during spermatogenesis. At uncapped telomeres, promotes the joining of deprotected chromosome ends by inducing H2A ubiquitination and TP53BP1 recruitment, suggesting that it may enhance cancer development by aggravating telomere-induced genome instability in case of telomeric crisis. Promotes the assembly of RAD51 at DNA DSBs in the absence of BRCA1 and TP53BP1 Also involved in class switch recombination in immune system, via its role in regulation of DSBs repair. May be required for proper exit from mitosis after spindle checkpoint activation and may regulate cytokinesis. May play a role in the regulation of RXRA-mediated transcriptional activity. Not involved in RXRA ubiquitination by UBE2E2. The protein is E3 ubiquitin-protein ligase RNF8 of Rattus norvegicus (Rat).